We begin with the raw amino-acid sequence, 21 residues long: Putative sperm adenylate cyclase (21 aa).

The enzyme catalyses ATP = 3',5'-cyclic AMP + diphosphate. The polypeptide is Putative sperm adenylate cyclase (Mus musculus (Mouse)).